The primary structure comprises 302 residues: O-antigen biosynthesis glycosyltransferase WbnK (302 aa).

This sequence belongs to the glycosyltransferase 11 family.

The catalysed reaction is beta-D-Gal-(1-&gt;3)-alpha-D-GalNAc-(1-&gt;3)-alpha-D-GalNAc-di-trans,octa-cis-undecaprenyl diphosphate + GDP-beta-L-fucose = alpha-L-Fuc-(1-&gt;2)-beta-D-Gal-(1-&gt;3)-alpha-D-GalNAc-(1-&gt;3)-alpha-D-GalNAc-di-trans,octa-cis-undecaprenyl diphosphate + GDP + H(+). The protein operates within bacterial outer membrane biogenesis; LPS O-antigen biosynthesis. Functionally, involved in the assembly of the O-repeating unit during O-antigen biosynthesis. This Escherichia coli protein is O-antigen biosynthesis glycosyltransferase WbnK.